We begin with the raw amino-acid sequence, 190 residues long: uncharacterized protein (190 aa).

This is an uncharacterized protein from Borreliella burgdorferi (strain ATCC 35210 / DSM 4680 / CIP 102532 / B31) (Borrelia burgdorferi).